Here is a 261-residue protein sequence, read N- to C-terminus: Mite allergen Der p 3 (261 aa).

Positions 1 to 18 are cleaved as a signal peptide; it reads MIIYNILIVLLLAINTLA. Positions 19 to 29 are excised as a propeptide; that stretch reads NPILPASPNAT. Residues 30 to 260 enclose the Peptidase S1 domain; it reads IVGGEKALAG…FIDWIESKRS (231 aa). Cys-54 and Cys-70 form a disulfide bridge. Catalysis depends on charge relay system residues His-69 and Asp-114. Disulfide bonds link Cys-181–Cys-198 and Cys-210–Cys-236. The active-site Charge relay system is Ser-214.

This sequence belongs to the peptidase S1 family.

It is found in the secreted. This Dermatophagoides pteronyssinus (European house dust mite) protein is Mite allergen Der p 3 (DERP3).